A 151-amino-acid chain; its full sequence is Ribosome maturation factor RimP (151 aa).

The protein belongs to the RimP family.

The protein localises to the cytoplasm. Its function is as follows. Required for maturation of 30S ribosomal subunits. The polypeptide is Ribosome maturation factor RimP (Halorhodospira halophila (strain DSM 244 / SL1) (Ectothiorhodospira halophila (strain DSM 244 / SL1))).